The primary structure comprises 950 residues: Translation initiation factor IF-2 (950 aa).

2 disordered regions span residues 69-92 and 128-352; these read KTKT…AGKA and KPKV…SNVP. 5 stretches are compositionally biased toward basic and acidic residues: residues 77–86, 128–158, 165–186, 200–234, and 291–312; these read AKSKQEDHPR, KPKV…EAKA, AEVK…EKKK, KRAE…DNRR, and NRRD…DGNR. Composition is skewed to polar residues over residues 322 to 336 and 343 to 352; these read NRNQ…NWNQ and YQNNQSSNVP. The region spanning 448–619 is the tr-type G domain; sequence ERPAVVTIMG…LLVAEVQELK (172 aa). The segment at 457–464 is G1; that stretch reads GHVDHGKT. GTP is bound at residue 457–464; the sequence is GHVDHGKT. The segment at 482–486 is G2; that stretch reads GITQH. The G3 stretch occupies residues 503–506; that stretch reads DTPG. GTP-binding positions include 503-507 and 557-560; these read DTPGH and NKID. Residues 557–560 form a G4 region; it reads NKID. Positions 595-597 are G5; sequence SAK.

It belongs to the TRAFAC class translation factor GTPase superfamily. Classic translation factor GTPase family. IF-2 subfamily.

It localises to the cytoplasm. Its function is as follows. One of the essential components for the initiation of protein synthesis. Protects formylmethionyl-tRNA from spontaneous hydrolysis and promotes its binding to the 30S ribosomal subunits. Also involved in the hydrolysis of GTP during the formation of the 70S ribosomal complex. This is Translation initiation factor IF-2 from Lactococcus lactis subsp. cremoris (strain SK11).